Here is a 349-residue protein sequence, read N- to C-terminus: SUMO-activating enzyme subunit 1 (349 aa).

The residue at position 1 (M1) is an N-acetylmethionine. Residue V2 is modified to N-acetylvaline; in SUMO-activating enzyme subunit 1, N-terminally processed. The residue at position 15 (S15) is a Phosphoserine. An N6-acetyllysine modification is found at K201.

The protein belongs to the ubiquitin-activating E1 family. Heterodimer of SAE1 and UBA2/SAE2. The heterodimer corresponds to the two domains that are encoded on a single polypeptide chain in ubiquitin-activating enzyme E1. Interacts with UBE2I.

It is found in the nucleus. The protein operates within protein modification; protein sumoylation. In terms of biological role, the heterodimer acts as an E1 ligase for SUMO1, SUMO2, SUMO3, and probably SUMO4. It mediates ATP-dependent activation of SUMO proteins followed by formation of a thioester bond between a SUMO protein and a conserved active site cysteine residue on UBA2/SAE2. The sequence is that of SUMO-activating enzyme subunit 1 (Sae1) from Rattus norvegicus (Rat).